The chain runs to 513 residues: ABC transporter H family member 2 (513 aa).

The ABC transporter domain maps to 39–280 (LTMKNIHKTY…EHYQKLYKEC (242 aa)). 75 to 82 (GTSGGGKT) serves as a coordination point for ATP. A disordered region spans residues 291–471 (VTSVFKNDDD…SSSYSNNNNN (181 aa)). Over residues 324 to 360 (SYNNNNSNLNNNSNSNSNNNSNNNNSKNYASSSSSSS) the composition is skewed to low complexity. Over residues 361 to 386 (VLNGKLSQSTVNNSSIYNHNNDSPFF) the composition is skewed to polar residues. Residues 387 to 471 (NSNNNNNINN…SSSYSNNNNN (85 aa)) show a composition bias toward low complexity.

This sequence belongs to the ABC transporter superfamily.

The chain is ABC transporter H family member 2 (abcH2) from Dictyostelium discoideum (Social amoeba).